The primary structure comprises 119 residues: Large ribosomal subunit protein bL20 (119 aa).

Belongs to the bacterial ribosomal protein bL20 family.

Functionally, binds directly to 23S ribosomal RNA and is necessary for the in vitro assembly process of the 50S ribosomal subunit. It is not involved in the protein synthesizing functions of that subunit. This Azoarcus sp. (strain BH72) protein is Large ribosomal subunit protein bL20.